The sequence spans 238 residues: Endonuclease V (238 aa).

The Mg(2+) site is built by Asp-46 and Asp-116.

Belongs to the endonuclease V family. It depends on Mg(2+) as a cofactor.

The protein resides in the cytoplasm. The enzyme catalyses Endonucleolytic cleavage at apurinic or apyrimidinic sites to products with a 5'-phosphate.. Functionally, DNA repair enzyme involved in the repair of deaminated bases. Selectively cleaves double-stranded DNA at the second phosphodiester bond 3' to a deoxyinosine leaving behind the intact lesion on the nicked DNA. The protein is Endonuclease V of Bacillus subtilis (strain 168).